An 859-amino-acid polypeptide reads, in one-letter code: Rab effector MyRIP (859 aa).

One can recognise a RabBD domain in the interval 4 to 124 (KLDLSGLTDD…AQSLEWFYNN (121 aa)). The FYVE-type zinc finger occupies 63-105 (CCMRCCSPFTFLVNTKRQCGDCKFNVCKSCCSYQKHEKAWVCC). Residues 143–560 (RKHRLESGAC…LDTHQVSDDL (418 aa)) form a myosin-binding region. The segment at 193 to 209 (VALRVAEEAIEEAISKA) is PKA-binding. A negative regulation of PKA-binding region spans residues 232-248 (LTEELATTILQKIIRKQ). Residues 251–285 (KSEQQVEEEPGWPHPQSCSTKVADEGTSASPGGYR) form a disordered region. Position 298 is a phosphoserine (Ser298). Disordered stretches follow at residues 302–374 (EEAL…KPKS), 386–629 (VASA…SQSV), and 783–812 (DQKQRTQVQTIDTSRQQRRKLPAPPVKAEK). Basic and acidic residues predominate over residues 316–326 (QPRDQGQHPRA). Ser350 carries the phosphoserine modification. A compositionally biased stretch (acidic residues) spans 393-403 (MGSDSEEDFDW). Low complexity predominate over residues 435-450 (PIAASPSSALSPNPEA). Composition is skewed to basic and acidic residues over residues 484-494 (AAEKMRLHGEL) and 607-617 (SEPKTESENQK). Positions 495–856 (DVNFNPQLAS…DLMEPALESA (362 aa)) are actin-binding. Composition is skewed to polar residues over residues 618 to 629 (ESLSSEDNSQSV) and 787 to 796 (RTQVQTIDTS).

In terms of assembly, binds MYO5A, MYO7A and F-actin. Binds RAB27A that has been activated by GTP-binding via its N-terminus. Interacts with PRKAR2A. Interacts with components of the exocyst complex, including EXOC3 and EXOC4. Detected in brain, skin, heart, adrenal medulla, pancreas, intestine, liver, kidney, muscle and testis.

The protein resides in the cytoplasm. It localises to the perinuclear region. The protein localises to the cytoplasmic vesicle. Its subcellular location is the secretory vesicle. Rab effector protein involved in melanosome transport. Serves as link between melanosome-bound RAB27A and the motor proteins MYO5A and MYO7A. May link RAB27A-containing vesicles to actin filaments. Functions as a protein kinase A-anchoring protein (AKAP). May act as a scaffolding protein that links PKA to components of the exocytosis machinery, thus facilitating exocytosis, including insulin release. This is Rab effector MyRIP (MYRIP) from Homo sapiens (Human).